The following is a 626-amino-acid chain: tRNA 5-methylaminomethyl-2-thiouridine biosynthesis bifunctional protein MnmC (626 aa).

A tRNA (mnm(5)s(2)U34)-methyltransferase region spans residues methionine 1–glutamine 237. Residues isoleucine 255–glutamate 626 form an FAD-dependent cmnm(5)s(2)U34 oxidoreductase region.

In the N-terminal section; belongs to the methyltransferase superfamily. tRNA (mnm(5)s(2)U34)-methyltransferase family. This sequence in the C-terminal section; belongs to the DAO family. The cofactor is FAD.

The protein resides in the cytoplasm. It catalyses the reaction 5-aminomethyl-2-thiouridine(34) in tRNA + S-adenosyl-L-methionine = 5-methylaminomethyl-2-thiouridine(34) in tRNA + S-adenosyl-L-homocysteine + H(+). Its function is as follows. Catalyzes the last two steps in the biosynthesis of 5-methylaminomethyl-2-thiouridine (mnm(5)s(2)U) at the wobble position (U34) in tRNA. Catalyzes the FAD-dependent demodification of cmnm(5)s(2)U34 to nm(5)s(2)U34, followed by the transfer of a methyl group from S-adenosyl-L-methionine to nm(5)s(2)U34, to form mnm(5)s(2)U34. The polypeptide is tRNA 5-methylaminomethyl-2-thiouridine biosynthesis bifunctional protein MnmC (Hahella chejuensis (strain KCTC 2396)).